The chain runs to 414 residues: Cyclohex-1-ene-1-carbonyl-CoA dehydrogenase (414 aa).

The active-site Proton acceptor is the aspartate 124. The FAD site is built by alanine 157, threonine 158, serine 164, and threonine 190. Serine 164 is a binding site for cyclohex-1-ene-1-carbonyl-CoA. Serine 164 serves as a coordination point for cyclohexa-1,5-diene-1-carbonyl-CoA. Residues lysine 211, arginine 275, and threonine 396 each contribute to the cyclohex-1-ene-1-carbonyl-CoA site. The cyclohexa-1,5-diene-1-carbonyl-CoA site is built by lysine 211, arginine 275, and threonine 396. The FAD site is built by threonine 398 and glutamine 400. Position 408 (arginine 408) interacts with cyclohex-1-ene-1-carbonyl-CoA. Cyclohexa-1,5-diene-1-carbonyl-CoA is bound at residue arginine 408.

This sequence belongs to the acyl-CoA dehydrogenase family. Homotetramer. It depends on FAD as a cofactor.

It carries out the reaction cyclohex-1-ene-1-carbonyl-CoA + oxidized [electron-transfer flavoprotein] + H(+) = cyclohexa-1,5-diene-1-carbonyl-CoA + reduced [electron-transfer flavoprotein]. Its function is as follows. Mediates the conversion of cyclohex-1-ene-1-carbonyl-CoA (Ch1CoA) into (E)-2-cyclohex-1,5-diene-1-carbonyl-CoA in biosynthesis of cyclohexane-1-carboxylate, a by-product produced during fermentation of benzoate and crotonate to acetate. Also able to further convert (E)-2-cyclohex-1,5-diene-1-carbonyl-CoA to benzoyl-CoA. The polypeptide is Cyclohex-1-ene-1-carbonyl-CoA dehydrogenase (Syntrophus aciditrophicus (strain SB)).